Here is a 1095-residue protein sequence, read N- to C-terminus: DNA-directed RNA polymerase subunit beta (1095 aa).

Positions 1069–1095 are disordered; the sequence is DLMQDVNPRRSTPSRPTYESLGKEYEE.

Belongs to the RNA polymerase beta chain family. In terms of assembly, in cyanobacteria the RNAP catalytic core is composed of 2 alpha, 1 beta, 1 beta', 1 gamma and 1 omega subunit. When a sigma factor is associated with the core the holoenzyme is formed, which can initiate transcription.

The enzyme catalyses RNA(n) + a ribonucleoside 5'-triphosphate = RNA(n+1) + diphosphate. In terms of biological role, DNA-dependent RNA polymerase catalyzes the transcription of DNA into RNA using the four ribonucleoside triphosphates as substrates. This is DNA-directed RNA polymerase subunit beta from Prochlorococcus marinus (strain NATL1A).